A 505-amino-acid chain; its full sequence is Maturase K (505 aa).

Belongs to the intron maturase 2 family. MatK subfamily.

It localises to the plastid. The protein localises to the chloroplast. Functionally, usually encoded in the trnK tRNA gene intron. Probably assists in splicing its own and other chloroplast group II introns. This chain is Maturase K, found in Rosa stellata (Star rose).